The following is a 551-amino-acid chain: Palmdelphin (551 aa).

The residue at position 1 (Met1) is an N-acetylmethionine. The stretch at 12–106 (QAITDKRKIQ…LQISANEEAI (95 aa)) forms a coiled coil. Lys125 participates in a covalent cross-link: Glycyl lysine isopeptide (Lys-Gly) (interchain with G-Cter in SUMO2). Phosphoserine is present on Ser135. Lys178 is covalently cross-linked (Glycyl lysine isopeptide (Lys-Gly) (interchain with G-Cter in SUMO1); alternate). Residue Lys178 forms a Glycyl lysine isopeptide (Lys-Gly) (interchain with G-Cter in SUMO2); alternate linkage. The segment covering 247–258 (ERNSKSPTEYHE) has biased composition (basic and acidic residues). Residues 247 to 266 (ERNSKSPTEYHEPVYANPFC) are disordered. Thr270 is subject to Phosphothreonine. Disordered stretches follow at residues 294 to 390 (LGNH…TCQE) and 451 to 533 (AEDN…GTED). A phosphoserine mark is found at Ser321 and Ser349. Residues 341–353 (HTQQKRMASPWEE) show a composition bias toward polar residues. The segment covering 354 to 365 (SSNRQNEHEVSP) has biased composition (basic and acidic residues). 7 positions are modified to phosphoserine: Ser370, Ser375, Ser384, Ser385, Ser498, Ser515, and Ser520.

This sequence belongs to the paralemmin family. Interacts with GLUL. Post-translationally, phosphorylated. Ubiquitous. Expressed at highest levels in the heart and lung.

The protein localises to the cytoplasm. Its subcellular location is the cell projection. The protein resides in the dendrite. It localises to the dendritic spine. The protein is Palmdelphin (Palmd) of Mus musculus (Mouse).